A 161-amino-acid chain; its full sequence is UPF0178 protein BSUIS_A1819 (161 aa).

Belongs to the UPF0178 family.

The chain is UPF0178 protein BSUIS_A1819 from Brucella suis (strain ATCC 23445 / NCTC 10510).